The chain runs to 601 residues: Dual specificity tyrosine-phosphorylation-regulated kinase 2 (601 aa).

The disordered stretch occupies residues 1-24; sequence MLTRKPSAAAPAAYPTGRGGDSAV. Position 30 is a phosphoserine (serine 30). Threonine 106 carries the phosphothreonine; by ATM modification. A Nuclear localization signal motif is present at residues 189-191; it reads KKR. The Protein kinase domain maps to 222–535; sequence YEVLKVIGKG…PGQALRHPWL (314 aa). ATP contacts are provided by residues 228–236, lysine 251, and 301–304; these read IGKGSFGQV and FELL. Aspartate 348 functions as the Proton acceptor in the catalytic mechanism. At threonine 381 the chain carries Phosphothreonine; by MAP3K10. A Phosphotyrosine; by autocatalysis modification is found at tyrosine 382. Serine 442 bears the Phosphoserine; by ATM mark. At serine 449 the chain carries Phosphoserine; by MAP3K10.

Belongs to the protein kinase superfamily. CMGC Ser/Thr protein kinase family. MNB/DYRK subfamily. In terms of assembly, component of an E3 ligase complex containing DYRK2, EDD/UBR5, DDB1 and DCAF1 (EDVP complex). Interacts directly with EDD/UBR5, DDB1 and DCAF1. Interacts with SIAH2 and MDM2. Interacts with MAP3K10 and NFATC1. May also interact with CCNL2. It depends on Mg(2+) as a cofactor. Mn(2+) is required as a cofactor. In terms of processing, autophosphorylates cotranslationally on the second tyrosine residue in the Tyr-X-Tyr motif in the activation loop, but once mature, does not have any protein tyrosine kinase activity. Phosphorylated at Thr-106 and Ser-442 by ATM in response to genotoxic stress. Post-translationally, under normal conditions, polyubiquitinated in the nucleus by MDM2, leading to its proteasomal degradation. Phosphorylation on Thr-106 and Ser-442 by ATM in response to genotoxic stress disrupts MDM2 binding and prevents MDM2-mediated ubiquitination and subsequent proteasomal degradation. Polyubiquitinated by SIAH2, leading to its proteasomal degradation. Polyubiquitinated by SIAH2 occurs under normal conditions, and is enhanced in response to hypoxia. Testis, after the onset of spermatogenesis.

It localises to the cytoplasm. The protein localises to the nucleus. It carries out the reaction L-seryl-[protein] + ATP = O-phospho-L-seryl-[protein] + ADP + H(+). It catalyses the reaction L-threonyl-[protein] + ATP = O-phospho-L-threonyl-[protein] + ADP + H(+). The enzyme catalyses L-tyrosyl-[protein] + ATP = O-phospho-L-tyrosyl-[protein] + ADP + H(+). With respect to regulation, activated by autophosphorylation on the second tyrosine residue in the Tyr-X-Tyr motif in the activation loop. Inhibited by acridine analogs, purvalanol, and barely by harmine. Inhibited by leucettine and leucettine derivatives. In terms of biological role, serine/threonine-protein kinase involved in the regulation of the mitotic cell cycle, cell proliferation, apoptosis, organization of the cytoskeleton and neurite outgrowth. Functions in part via its role in ubiquitin-dependent proteasomal protein degradation. Functions downstream of ATM and phosphorylates p53/TP53 at 'Ser-46', and thereby contributes to the induction of apoptosis in response to DNA damage. Phosphorylates NFATC1, and thereby inhibits its accumulation in the nucleus and its transcription factor activity. Phosphorylates EIF2B5 at 'Ser-544', enabling its subsequent phosphorylation and inhibition by GSK3B. Likewise, phosphorylation of NFATC1, CRMP2/DPYSL2 and CRMP4/DPYSL3 promotes their subsequent phosphorylation by GSK3B. May play a general role in the priming of GSK3 substrates. Inactivates GYS1 by phosphorylation at 'Ser-641', and potentially also a second phosphorylation site, thus regulating glycogen synthesis. Mediates EDVP E3 ligase complex formation and is required for the phosphorylation and subsequent degradation of KATNA1. Phosphorylates TERT at 'Ser-457', promoting TERT ubiquitination by the EDVP complex. Phosphorylates SIAH2, and thereby increases its ubiquitin ligase activity. Promotes the proteasomal degradation of MYC and JUN, and thereby regulates progress through the mitotic cell cycle and cell proliferation. Promotes proteasomal degradation of GLI2 and GLI3, and thereby plays a role in smoothened and sonic hedgehog signaling. Plays a role in cytoskeleton organization and neurite outgrowth via its phosphorylation of DCX and DPYSL2. Phosphorylates CRMP2/DPYSL2, CRMP4/DPYSL3, DCX, EIF2B5, EIF4EBP1, GLI2, GLI3, GYS1, JUN, MDM2, MYC, NFATC1, p53/TP53, TAU/MAPT and KATNA1. Can phosphorylate histone H1, histone H3 and histone H2B (in vitro). Can phosphorylate CARHSP1 (in vitro). The sequence is that of Dual specificity tyrosine-phosphorylation-regulated kinase 2 (DYRK2) from Homo sapiens (Human).